The following is a 203-amino-acid chain: RNA chaperone ProQ (203 aa).

The tract at residues 111-138 (KAKRQALAPKKPAKKVAPKRAPAVKKER) is disordered.

Belongs to the ProQ family.

It is found in the cytoplasm. Functionally, RNA chaperone with significant RNA binding, RNA strand exchange and RNA duplexing activities. The chain is RNA chaperone ProQ from Shewanella frigidimarina (strain NCIMB 400).